Reading from the N-terminus, the 172-residue chain is Interferon tau-3 (172 aa).

2 disulfides stabilise this stretch: Cys-1/Cys-99 and Cys-29/Cys-139. Asn-78 carries N-linked (GlcNAc...) asparagine glycosylation.

The protein belongs to the alpha/beta interferon family. IFN-alphaII subfamily. In terms of tissue distribution, constitutively and exclusively expressed in the mononuclear cells of the extraembryonic trophectoderm.

The protein resides in the secreted. Its function is as follows. Paracrine hormone primarily responsible for maternal recognition of pregnancy. Interacts with endometrial receptors, probably type I interferon receptors, and blocks estrogen receptor expression, preventing the estrogen-induced increase in oxytocin receptor expression in the endometrium. This results in the suppression of the pulsatile endometrial release of the luteolytic hormone prostaglandin F2-alpha, hindering the regression of the corpus luteum (luteolysis) and therefore a return to ovarian cyclicity. This, and a possible direct effect of IFN-tau on prostaglandin synthesis, leads in turn to continued ovarian progesterone secretion, which stimulates the secretion by the endometrium of the nutrients required for the growth of the conceptus. In summary, displays particularly high antiviral and antiproliferative potency concurrently with particular weak cytotoxicity, high antiluteolytic activity and immunomodulatory properties. In contrast with other IFNs, IFN-tau is not virally inducible. This Bos taurus (Bovine) protein is Interferon tau-3 (IFNT3).